We begin with the raw amino-acid sequence, 600 residues long: Probable tripeptidyl-peptidase SED4 (600 aa).

The signal sequence occupies residues 1 to 22 (MVSFTLRAIGACLIGLPALITA). Positions 23-202 (APTSHVSNGF…SVFTSDLEMT (180 aa)) are cleaved as a propeptide — removed in mature form. Residues Asn210 and Asn281 are each glycosylated (N-linked (GlcNAc...) asparagine). In terms of domain architecture, Peptidase S53 spans 212–600 (TITPDCIREL…FEKLSKLVLI (389 aa)). Residues Glu288 and Asp292 each act as charge relay system in the active site. N-linked (GlcNAc...) asparagine glycans are attached at residues Asn323 and Asn404. Catalysis depends on Ser504, which acts as the Charge relay system. Residues Asp546, Ile547, Gly579, and Asp581 each contribute to the Ca(2+) site.

It depends on Ca(2+) as a cofactor.

The protein resides in the secreted. The protein localises to the extracellular space. The enzyme catalyses Release of an N-terminal tripeptide from a polypeptide.. Functionally, secreted tripeptidyl-peptidase which degrades proteins at acidic pHs and is involved in virulence. This Trichophyton verrucosum (strain HKI 0517) protein is Probable tripeptidyl-peptidase SED4 (SED4).